Reading from the N-terminus, the 549-residue chain is Cation/acetate symporter ActP (549 aa).

Transmembrane regions (helical) follow at residues 33–53 (WQAI…TYWA), 77–97 (LAIA…ALVF), 103–123 (GLIY…LIAE), 148–168 (ILSA…QMVG), 183–203 (IAVV…GMLA), 206–226 (WVQI…AFMV), 262–282 (ISAL…PHIL), 303–323 (GFMG…IMLV), 355–375 (LFLG…VAGL), 404–424 (VSKI…VLFE), 428–448 (IAFM…PIIL), 464–484 (GGWL…TIWV), and 493–513 (IFPY…GIWF).

It belongs to the sodium:solute symporter (SSF) (TC 2.A.21) family.

It is found in the cell inner membrane. Its function is as follows. Transports acetate. The polypeptide is Cation/acetate symporter ActP (Salmonella gallinarum (strain 287/91 / NCTC 13346)).